Reading from the N-terminus, the 81-residue chain is Acyl carrier protein (81 aa).

In terms of domain architecture, Carrier spans 1–79; that stretch reads MDREEILQKI…EAVDYVVEHQ (79 aa). Ser39 is modified (O-(pantetheine 4'-phosphoryl)serine).

Belongs to the acyl carrier protein (ACP) family. In terms of processing, 4'-phosphopantetheine is transferred from CoA to a specific serine of apo-ACP by AcpS. This modification is essential for activity because fatty acids are bound in thioester linkage to the sulfhydryl of the prosthetic group.

The protein resides in the cytoplasm. It functions in the pathway lipid metabolism; fatty acid biosynthesis. In terms of biological role, carrier of the growing fatty acid chain in fatty acid biosynthesis. This chain is Acyl carrier protein, found in Rubrobacter xylanophilus (strain DSM 9941 / JCM 11954 / NBRC 16129 / PRD-1).